Here is a 934-residue protein sequence, read N- to C-terminus: Palmitoyltransferase ZDHHC8 (934 aa).

The Cytoplasmic portion of the chain corresponds to 1-9 (MPKCDVKTR). The chain crosses the membrane as a helical span at residues 10-30 (YIPATFAWIVLLLTTFLFFFY). At 31-47 (PCQFYVKSHPWVLAYQG) the chain is on the extracellular side. Residues 48-68 (VITFFVLANFTLATFMDPGII) traverse the membrane as a helical segment. Topologically, residues 69 to 142 (PKASPDEDCE…NNCIGRRNYR (74 aa)) are cytoplasmic. Residues 99 to 149 (KWCVTCKFYRPPRCSHCSVCNHCIETFDHHCPWVNNCIGRRNYRFFFFFLV) form the DHHC domain. Residue cysteine 129 is the S-palmitoyl cysteine intermediate of the active site. Residues 143–163 (FFFFFLVSLSIHMLSIFSLCL) traverse the membrane as a helical segment. At 164 to 177 (VYVLKIMPNIKDTA) the chain is on the extracellular side. The chain crosses the membrane as a helical span at residues 178–198 (PIVAIILMGLVTILAIPIFGL). Topologically, residues 199–934 (TGFHMVLVSR…IYDMNYEISV (736 aa)) are cytoplasmic. 6 disordered regions span residues 336 to 440 (NGYN…GYTS), 506 to 525 (MASPVRRSNPGTPTQPRRPD), 669 to 705 (QRGVYMWKDTSPGFTNNAGQQQQQQQQAQQVVSSGIG), 751 to 780 (QQQQQQQQAAAAAAASYHRSNPTSPTTMPQ), 835 to 862 (PNPMGNQGGGNLQTQPSPQIKRKQTPTR), and 881 to 934 (LEQQ…EISV). Polar residues-rich tracts occupy residues 337–349 (GYNQRSGSTTLYS) and 381–394 (RHNSSSFYLPQVSD). Residues 397-411 (GLNGSVSTGGGGGGD) show a composition bias toward gly residues. The segment covering 415–429 (HMRLYHPRHSPHARP) has biased composition (basic residues). 2 stretches are compositionally biased toward low complexity: residues 688 to 705 (QQQQQQQQAQQVVSSGIG) and 751 to 765 (QQQQQQQQAAAAAAA). Residues 768 to 780 (HRSNPTSPTTMPQ) are compositionally biased toward polar residues. Positions 910–919 (MQSNASNSGT) are enriched in polar residues.

This sequence belongs to the DHHC palmitoyltransferase family. ERF2/ZDHHC9 subfamily.

Its subcellular location is the golgi apparatus membrane. The protein localises to the cell membrane. It carries out the reaction L-cysteinyl-[protein] + hexadecanoyl-CoA = S-hexadecanoyl-L-cysteinyl-[protein] + CoA. Functionally, palmitoyltransferase that catalyzes the addition of palmitate onto various protein substrates and therefore functions in several unrelated biological processes. Regulates tissue growth possibly by regulating Ras64B protein stability. May regulate CG34450 mRNA levels. The chain is Palmitoyltransferase ZDHHC8 from Drosophila melanogaster (Fruit fly).